Consider the following 439-residue polypeptide: GTPase Der (439 aa).

2 consecutive EngA-type G domains span residues 3–167 (PLVA…PKSS) and 176–351 (TRIA…AQYS). Residues 9-16 (GRPNVGKS), 56-60 (DTGGF), 119-122 (NKVD), 182-189 (GRPNVGKS), 229-233 (DTAGI), and 294-297 (NKWD) contribute to the GTP site. Positions 352–436 (KRVSTSDLNR…PLKIIFRGRD (85 aa)) constitute a KH-like domain.

This sequence belongs to the TRAFAC class TrmE-Era-EngA-EngB-Septin-like GTPase superfamily. EngA (Der) GTPase family. Associates with the 50S ribosomal subunit.

Its function is as follows. GTPase that plays an essential role in the late steps of ribosome biogenesis. In Geobacter metallireducens (strain ATCC 53774 / DSM 7210 / GS-15), this protein is GTPase Der.